Consider the following 270-residue polypeptide: Protein-ADP-ribose hydrolase (270 aa).

The Macro domain maps to 73 to 267 (VSVKDCQKTN…LYDTYLQKEN (195 aa)). ADP-D-ribose contacts are provided by Asp92, Ile93, and Asn106. 3 residues coordinate Zn(2+): Cys112, His117, and Cys119. Cys119, Ile120, Asp121, Ser212, Thr213, Gly214, Glu215, and Phe216 together coordinate ADP-D-ribose.

It belongs to the MacroD-type family. Zn-Macro subfamily. Zn(2+) serves as cofactor.

The enzyme catalyses 4-O-(ADP-D-ribosyl)-L-aspartyl-[protein] + H2O = L-aspartyl-[protein] + ADP-D-ribose + H(+). Its function is as follows. ADP-ribosylhydrolase that specifically reverses the SirTM-mediated mono-ADP-ribosylation at an asparatate residue of GcvH-L, by releasing ADP-ribose from the target protein. May play a role in the regulation of the response to host-induced oxidative stress. The protein is Protein-ADP-ribose hydrolase of Streptococcus pyogenes serotype M6 (strain ATCC BAA-946 / MGAS10394).